A 328-amino-acid chain; its full sequence is MTIRKALSLDFLKPILELEYQIQQLSKISTYQQVVLDQELVSFKEQLSILKYEVFQSLTPLQRLHLVRQADRPTTLDYIPYIMSEWLELHGDRGGKDDPALVGGIGKLNNYTVIFVGHQRGKDTKDNVLRNFGMASPGGYRKALRLMQHANQFNFPILTFIDTPGAWAGIDAETLGQGEAIAVNLREMFSFDVPIICTILGEGGSGGALGIGIGDKILMLEYAVYTVATPEACAAILWKDSKRSLDAAEALKITSADLKVLGVIDKVVKEPIGGSQSNPSQAAYILKESLISELHFLTQLLPSKRKNLRYSKFRKIGTFYEGSEDYFG.

Positions 42 to 296 (SFKEQLSILK…KESLISELHF (255 aa)) constitute a CoA carboxyltransferase C-terminal domain.

Belongs to the AccA family. As to quaternary structure, acetyl-CoA carboxylase is a heterohexamer composed of biotin carboxyl carrier protein (accB), biotin carboxylase (accC) and two subunits each of ACCase subunit alpha (accA) and ACCase subunit beta (accD).

It is found in the plastid. Its subcellular location is the chloroplast. It catalyses the reaction N(6)-carboxybiotinyl-L-lysyl-[protein] + acetyl-CoA = N(6)-biotinyl-L-lysyl-[protein] + malonyl-CoA. It participates in lipid metabolism; malonyl-CoA biosynthesis; malonyl-CoA from acetyl-CoA: step 1/1. Functionally, component of the acetyl coenzyme A carboxylase (ACC) complex. First, biotin carboxylase catalyzes the carboxylation of biotin on its carrier protein (BCCP) and then the CO(2) group is transferred by the carboxyltransferase to acetyl-CoA to form malonyl-CoA. This is Acetyl-coenzyme A carboxylase carboxyl transferase subunit alpha from Gracilaria tenuistipitata var. liui (Red alga).